Reading from the N-terminus, the 450-residue chain is Immunoglobulin G-binding protein A (450 aa).

Positions methionine 1–alanine 36 are cleaved as a signal peptide. The short motif at tyrosine 7 to serine 18 is the YSIRK-G/S signaling motif element. An Immunoglobulin-binding region E repeat occupies alanine 37–lysine 92. Residues alanine 93–lysine 153 form an Immunoglobulin-binding region D repeat. An Immunoglobulin-binding region A repeat occupies alanine 154–lysine 211. One copy of the Immunoglobulin-binding region B/C repeat lies at alanine 212–lysine 269. The span at lysine 260–asparagine 354 shows a compositional bias: basic and acidic residues. 2 disordered regions span residues lysine 260–valine 365 and lysine 401–glutamate 421. A run of 11 repeats spans residues proline 268–lysine 275, proline 276–lysine 283, proline 284–lysine 291, proline 292–lysine 299, proline 300–lysine 307, proline 308–lysine 315, proline 316–lysine 323, proline 324–lysine 331, proline 332–lysine 339, proline 340–lysine 347, and proline 348–glycine 355. The interval proline 268–glycine 355 is 12 X 8 AA approximate tandem repeats. One can recognise a LysM domain in the interval glycine 355–valine 399. The LPXTG sorting signal motif lies at leucine 416–glycine 420. A Pentaglycyl murein peptidoglycan amidated threonine modification is found at threonine 419. Residues glycine 420–leucine 450 constitute a propeptide, removed by sortase.

Belongs to the immunoglobulin-binding protein SpA family. Interacts with host TNFRSF1A; this interaction leads to the stimulation of both surface expression and shedding of TNFRSF1A.

It is found in the secreted. The protein resides in the cell wall. Functionally, plays a role in the inhibition of the host innate and adaptive immune responses. Possesses five immunoglobulin-binding domains that capture both the fragment crystallizable region (Fc region) and the Fab region (part of Ig that identifies antigen) of immunoglobulins. In turn, Staphylococcus aureus is protected from phagocytic killing via inhibition of Ig Fc region. In addition, the host elicited B-cell response is prevented due to a decrease of antibody-secreting cell proliferation that enter the bone marrow, thereby decreasing long-term antibody production. Inhibits osteogenesis by preventing osteoblast proliferation and expression of alkaline phosphatase, type I collagen, osteopontin and osteocalcin. Acts directly as a pro-inflammatory factor in the lung through its ability to bind and activate tumor necrosis factor alpha receptor 1/TNFRSF1A. The chain is Immunoglobulin G-binding protein A (spa) from Staphylococcus aureus (strain Mu50 / ATCC 700699).